The sequence spans 301 residues: Immediate early response gene 5-like protein (301 aa).

It belongs to the IER family.

This is Immediate early response gene 5-like protein (ier5l) from Danio rerio (Zebrafish).